A 164-amino-acid polypeptide reads, in one-letter code: Transcriptional repressor NrdR (164 aa).

Residues 3–34 (CPKCNYNKSSVVDSRQAEDGNTIRRRRECESC) fold into a zinc finger. An ATP-cone domain is found at 49-139 (LLVIKKDGTR…VYKSFKDLDE (91 aa)).

It belongs to the NrdR family. It depends on Zn(2+) as a cofactor.

Negatively regulates transcription of bacterial ribonucleotide reductase nrd genes and operons by binding to NrdR-boxes. This is Transcriptional repressor NrdR from Streptococcus equi subsp. zooepidemicus (strain H70).